Here is a 355-residue protein sequence, read N- to C-terminus: Chemerin-like receptor 2 (355 aa).

Topologically, residues 1-41 are extracellular; it reads MEDLEETLFEEFENYSYALDYYSLESDLEEKVQLGVVHWVS. Asparagine 14 carries an N-linked (GlcNAc...) asparagine glycan. The helical transmembrane segment at 42–62 threads the bilayer; that stretch reads LVLYCLSFVLGIPGNAIVIWF. At 63–73 the chain is on the cytoplasmic side; it reads TGFKWKKTVST. Residues 74 to 94 traverse the membrane as a helical segment; the sequence is LWFLNLAIADFIFLLFLPLYI. At 95-112 the chain is on the extracellular side; sequence SYVVMNFHWPFGIWLCKA. The cysteines at positions 110 and 187 are disulfide-linked. A helical transmembrane segment spans residues 113 to 133; the sequence is NSFTAQLNMFASVFFLTVISL. The Cytoplasmic segment spans residues 134–154; that stretch reads DHYIHLIHPVLSHRHRTLKNS. The helical transmembrane segment at 155 to 175 threads the bilayer; that stretch reads LIVIIFIWLLASLIGGPALYF. Residues 176–210 are Extracellular-facing; that stretch reads RDTVEFNNHTLCYNNFQKHDPDLTVIRHHVLTWVK. The chain crosses the membrane as a helical span at residues 211–231; sequence FIVGYLFPLLTMSICYLCLIF. The Cytoplasmic portion of the chain corresponds to 232–247; that stretch reads KVKKRSILISSRHFWT. The chain crosses the membrane as a helical span at residues 248-268; that stretch reads ILAVVVAFVVCWTPYHLFSIW. The Extracellular segment spans residues 269–286; that stretch reads ELTIHHNSYSHHVMQAGI. A helical transmembrane segment spans residues 287–307; sequence PLSTGLAFLNSCLNPILYVLI. Over 308 to 355 the chain is Cytoplasmic; that stretch reads SKKFQARFRSSVAEILKYTLWEVSCSGTVSEQLRNSETKNLCLLETAQ.

This sequence belongs to the chemokine-like receptor (CMKLR) family.

It is found in the cell membrane. Receptor for chemoattractant adipokine chemerin/RARRES2 suggesting a role for this receptor in the regulation of inflammation and energy homesotasis. Signals mainly via beta-arrestin pathway. Binding of RARRES2 activates weakly G proteins, calcium mobilization and MAPK1/MAPK3 (ERK1/2) phosphorylation too. Acts also as a receptor for TAFA1, mediates its effects on neuronal stem-cell proliferation and differentiation via the activation of ROCK/ERK and ROCK/STAT3 signaling pathway. The protein is Chemerin-like receptor 2 (CMKLR2) of Macaca mulatta (Rhesus macaque).